Here is an 89-residue protein sequence, read N- to C-terminus: Small ribosomal subunit protein uS17 (89 aa).

This sequence belongs to the universal ribosomal protein uS17 family. As to quaternary structure, part of the 30S ribosomal subunit.

Functionally, one of the primary rRNA binding proteins, it binds specifically to the 5'-end of 16S ribosomal RNA. The chain is Small ribosomal subunit protein uS17 from Albidiferax ferrireducens (strain ATCC BAA-621 / DSM 15236 / T118) (Rhodoferax ferrireducens).